The chain runs to 287 residues: ATP synthase gamma chain (287 aa).

This sequence belongs to the ATPase gamma chain family. In terms of assembly, F-type ATPases have 2 components, CF(1) - the catalytic core - and CF(0) - the membrane proton channel. CF(1) has five subunits: alpha(3), beta(3), gamma(1), delta(1), epsilon(1). CF(0) has three main subunits: a, b and c.

Its subcellular location is the cell membrane. In terms of biological role, produces ATP from ADP in the presence of a proton gradient across the membrane. The gamma chain is believed to be important in regulating ATPase activity and the flow of protons through the CF(0) complex. In Staphylococcus carnosus (strain TM300), this protein is ATP synthase gamma chain.